Consider the following 381-residue polypeptide: Regulatory protein RapF (381 aa).

Residues L40, M43, and E45 each contribute to the Mn(2+) site. TPR repeat units lie at residues 101 to 137 (YYFN…VKDR), 148 to 181 (SESY…NIRL), 182 to 215 (LQCH…AEAE), 222 to 255 (GRTL…FEES), 262 to 295 (PQAY…SQKA), and 337 to 370 (EDFA…RQLI).

It belongs to the Rap family. As to quaternary structure, monomer. Is monomeric either alone or in complex with PhrF. Interacts specifically with the C-terminal DNA-binding domain of ComA. Interacts with PhrF.

The protein localises to the cytoplasm. With respect to regulation, inhibited by PhrF, which prevents RapF-ComA interaction. Interaction with PhrF induces a conformational change in RapF, which is propagated to the ComA binding site and causes the dissociation of ComA from RapF. Involved in the regulation of genetic competence development. Inhibits the activity of ComA, a transcriptional factor that regulates the development of genetic competence. Acts by binding to ComA, leading to the inhibition of its DNA-binding activity. May also affect transcription independently of ComA. The sequence is that of Regulatory protein RapF (rapF) from Bacillus subtilis (strain 168).